Reading from the N-terminus, the 414-residue chain is Imidazolonepropionase (414 aa).

The Fe(3+) site is built by histidine 77 and histidine 79. Positions 77 and 79 each coordinate Zn(2+). Residues arginine 86, tyrosine 149, and histidine 184 each coordinate 4-imidazolone-5-propanoate. Residue tyrosine 149 coordinates N-formimidoyl-L-glutamate. A Fe(3+)-binding site is contributed by histidine 249. Residue histidine 249 participates in Zn(2+) binding. 4-imidazolone-5-propanoate is bound at residue glutamate 252. Aspartate 323 is a Fe(3+) binding site. Aspartate 323 contributes to the Zn(2+) binding site. Residues asparagine 325 and glycine 327 each coordinate N-formimidoyl-L-glutamate. Residue serine 328 coordinates 4-imidazolone-5-propanoate.

This sequence belongs to the metallo-dependent hydrolases superfamily. HutI family. It depends on Zn(2+) as a cofactor. Requires Fe(3+) as cofactor.

It localises to the cytoplasm. The catalysed reaction is 4-imidazolone-5-propanoate + H2O = N-formimidoyl-L-glutamate. It functions in the pathway amino-acid degradation; L-histidine degradation into L-glutamate; N-formimidoyl-L-glutamate from L-histidine: step 3/3. In terms of biological role, catalyzes the hydrolytic cleavage of the carbon-nitrogen bond in imidazolone-5-propanoate to yield N-formimidoyl-L-glutamate. It is the third step in the universal histidine degradation pathway. This Phocaeicola vulgatus (strain ATCC 8482 / DSM 1447 / JCM 5826 / CCUG 4940 / NBRC 14291 / NCTC 11154) (Bacteroides vulgatus) protein is Imidazolonepropionase.